A 368-amino-acid polypeptide reads, in one-letter code: Geranylgeranyl pyrophosphate synthase dpfgD (368 aa).

Lysine 48, arginine 51, and histidine 80 together coordinate isopentenyl diphosphate. Residues aspartate 87 and aspartate 91 each contribute to the Mg(2+) site. Dimethylallyl diphosphate is bound at residue arginine 96. Isopentenyl diphosphate is bound at residue arginine 97. The dimethylallyl diphosphate site is built by lysine 174, threonine 175, and glutamine 208. Aspartate 211 is a Mg(2+) binding site. Residues asparagine 215, lysine 225, and lysine 235 each coordinate dimethylallyl diphosphate.

It belongs to the FPP/GGPP synthase family. Mg(2+) serves as cofactor.

It carries out the reaction isopentenyl diphosphate + dimethylallyl diphosphate = (2E)-geranyl diphosphate + diphosphate. It catalyses the reaction isopentenyl diphosphate + (2E)-geranyl diphosphate = (2E,6E)-farnesyl diphosphate + diphosphate. The catalysed reaction is isopentenyl diphosphate + (2E,6E)-farnesyl diphosphate = (2E,6E,10E)-geranylgeranyl diphosphate + diphosphate. The protein operates within secondary metabolite biosynthesis; terpenoid biosynthesis. In terms of biological role, geranylgeranyl pyrophosphate synthase; part of the gene cluster that mediates the biosynthesis of diterpenoid pyrones. The first step of the pathway is the synthesis of the alpha-pyrone moiety by the polyketide synthase dpfgA via condensation of one acetyl-CoA starter unit with 3 malonyl-CoA units and 2 methylations. The alpha-pyrone is then combined with geranylgeranyl pyrophosphate (GGPP) formed by the GGPP synthase dpfgD through the action of the prenyltransferase dpfgC to yield a linear alpha-pyrone diterpenoid. Subsequent steps in the diterpenoid pyrone biosynthetic pathway involve the decalin core formation, which is initiated by the epoxidation of the C10-C11 olefin by the FAD-dependent oxidoreductase dpfgE, and is followed by a cyclization cascade catalyzed by the terpene cyclase dpfgB. The short chain dehydrogenase/reductase dpfgG then oxidizes the 8S hydroxy group to a ketone and the short chain dehydrogenase/reductase dpfgH reduces the ketone to the 8R hydroxy group to yield higginsianin B. Higginsianin B is further methylated by the methyltransferase dpfgI to produce the intermediate named FDDP B. The cytochrome P450 monooxygenase dfgpJ then catalyzes a three-step oxidation at C-27 to generate a carboxylic acid as well as C-26 hydroxylation. Finally, methyltransferase dpfgK methylates the carboxylic acid generated by dpfgJ, yielding the final diterpenoid pyrones from the pathway which were named FDDP D and FDDP E. This chain is Geranylgeranyl pyrophosphate synthase dpfgD, found in Gibberella zeae (strain ATCC MYA-4620 / CBS 123657 / FGSC 9075 / NRRL 31084 / PH-1) (Wheat head blight fungus).